A 1352-amino-acid polypeptide reads, in one-letter code: Inhibitor of Bruton tyrosine kinase (1352 aa).

ANK repeat units lie at residues 51 to 80 (FGRN…DLLV) and 85 to 114 (SGWT…SLYM). 3 RCC1 repeats span residues 141 to 194 (PTEV…FLSQ), 195 to 246 (KGQV…VLTD), and 248 to 301 (GCVY…LWTR). The BTB 1 domain occupies 565 to 645 (HDVTFQVGNR…MYTDTCDLLT (81 aa)). Residues 692-716 (AHTLSERQKSKPKSSKKGKGVGDDD) form a disordered region. Residues 701-710 (SKPKSSKKGK) are compositionally biased toward basic residues. Positions 769-837 (YDVTMKSVDG…LYTDEAVVIK (69 aa)) constitute a BTB 2 domain. A disordered region spans residues 976-1002 (FKKAKTRAKKKPRKRSDSSGGYTLSDV). The span at 977 to 989 (KKAKTRAKKKPRK) shows a compositional bias: basic residues. S991 carries the phosphoserine modification. Over residues 993 to 1002 (SSGGYTLSDV) the composition is skewed to polar residues. A phosphoserine mark is found at S1005, S1031, S1034, S1040, S1046, S1055, S1084, S1111, S1113, and S1116. Positions 1032–1094 (EGSYAGVASP…PTTKSAPQFI (63 aa)) are disordered. Over residues 1084-1094 (SPTTKSAPQFI) the composition is skewed to polar residues.

Interacts with the PH domain of BTK.

The protein localises to the cytoplasm. The protein resides in the membrane. Acts as an inhibitor of BTK tyrosine kinase activity, thereby playing a role in B-cell development. Down-regulates BTK kinase activity, leading to interference with BTK-mediated calcium mobilization and NF-kappa-B-driven transcription. The sequence is that of Inhibitor of Bruton tyrosine kinase (Ibtk) from Mus musculus (Mouse).